Reading from the N-terminus, the 448-residue chain is Probable glycine dehydrogenase (decarboxylating) subunit 1 (448 aa).

This sequence belongs to the GcvP family. N-terminal subunit subfamily. As to quaternary structure, the glycine cleavage system is composed of four proteins: P, T, L and H. In this organism, the P 'protein' is a heterodimer of two subunits.

The catalysed reaction is N(6)-[(R)-lipoyl]-L-lysyl-[glycine-cleavage complex H protein] + glycine + H(+) = N(6)-[(R)-S(8)-aminomethyldihydrolipoyl]-L-lysyl-[glycine-cleavage complex H protein] + CO2. Its function is as follows. The glycine cleavage system catalyzes the degradation of glycine. The P protein binds the alpha-amino group of glycine through its pyridoxal phosphate cofactor; CO(2) is released and the remaining methylamine moiety is then transferred to the lipoamide cofactor of the H protein. The polypeptide is Probable glycine dehydrogenase (decarboxylating) subunit 1 (Lysinibacillus sphaericus (strain C3-41)).